We begin with the raw amino-acid sequence, 475 residues long: Ankyrin repeat, SAM and basic leucine zipper domain-containing protein 1 (475 aa).

The disordered stretch occupies residues 1–24; sequence MAGSLGNLVVAGGGESSDSEEDYW. Residues S16, S17, and S19 each carry the phosphoserine modification. 6 ANK repeats span residues 44–73, 77–106, 109–146, 147–176, 180–209, and 213–242; these read ERDETFKKALTSGDVSLVEELLNSGMSVES, FGWTPLMCAVNIANVELVRILLDRGANASF, DQYTILMAACAAHASESQILKTVELLLSRNANPNVACR, KCMTPVMYAAREGHAQVVALLVAHGAEINA, NGYTALTWAARHGHKSVVLKLLELGANKTI, and DGKTAGEIAKRNKHPELFTLLSLTVNPLQG. The SAM domain occupies 273-336; that stretch reads TAFGDLEVFL…LDAVKELQVE (64 aa).

In terms of assembly, interacts with DDX4, PIWIL1, RANBP9 and TDRD1.

The protein resides in the cytoplasm. Functionally, plays a central role during spermatogenesis by repressing transposable elements and preventing their mobilization, which is essential for the germline integrity. Acts via the piRNA metabolic process, which mediates the repression of transposable elements during meiosis by forming complexes composed of piRNAs and Piwi proteins and governs the methylation and subsequent repression of transposons. Its association with pi-bodies suggests a participation in the primary piRNAs metabolic process. Required prior to the pachytene stage to facilitate the production of multiple types of piRNAs, including those associated with repeats involved in the regulation of retrotransposons. May act by mediating protein-protein interactions during germ cell maturation. This Notamacropus eugenii (Tammar wallaby) protein is Ankyrin repeat, SAM and basic leucine zipper domain-containing protein 1 (ASZ1).